Consider the following 411-residue polypeptide: Protein phosphatase 1 regulatory subunit 36 (411 aa).

As to quaternary structure, interacts with PPP1CA.

In terms of biological role, inhibits phosphatase activity of protein phosphatase 1 (PP1) complexes. The polypeptide is Protein phosphatase 1 regulatory subunit 36 (Ppp1r36) (Rattus norvegicus (Rat)).